The following is a 430-amino-acid chain: Aspartate--tRNA(Asp/Asn) ligase (430 aa).

Glu-168 provides a ligand contact to L-aspartate. The aspartate stretch occupies residues 190–193; that stretch reads QLYK. Arg-212 is an L-aspartate binding site. Residues 212 to 214, 220 to 222, and Glu-353 each bind ATP; these read RAE and RHL. 2 residues coordinate Mg(2+): Glu-353 and Ser-356. Residues Ser-356 and Arg-360 each coordinate L-aspartate. Position 401 to 404 (401 to 404) interacts with ATP; the sequence is GAER.

This sequence belongs to the class-II aminoacyl-tRNA synthetase family. Type 2 subfamily. In terms of assembly, homodimer. Mg(2+) serves as cofactor.

The protein resides in the cytoplasm. The enzyme catalyses tRNA(Asx) + L-aspartate + ATP = L-aspartyl-tRNA(Asx) + AMP + diphosphate. Functionally, aspartyl-tRNA synthetase with relaxed tRNA specificity since it is able to aspartylate not only its cognate tRNA(Asp) but also tRNA(Asn). Reaction proceeds in two steps: L-aspartate is first activated by ATP to form Asp-AMP and then transferred to the acceptor end of tRNA(Asp/Asn). The sequence is that of Aspartate--tRNA(Asp/Asn) ligase from Archaeoglobus fulgidus (strain ATCC 49558 / DSM 4304 / JCM 9628 / NBRC 100126 / VC-16).